The following is a 285-amino-acid chain: MSAHTRTTRKTVTAIRSTKGIGSLVSLTAYSAPMAKLVDEVADVIIVGDSVGMVLYGMPDTLRVTLDMMIAHGAAVVRGAAQACVVVDLPFSTYQESPAQAYRSAARLLAETGAQGVKLEGGTEMADAIRFLTERGIPVMAHVGLMPQQANATGGFRAQGMDPRSAAQVFDAACSAEQAGAFSVVIEGTAEALARHITETLTIPTIGIGASPACDGQVLVTEDMIGAFDAYTPRFVKRYADANAVMRDAIRQYAHDVRQGVFPEPAHCFGYGKPLQLVGAADAAA.

Positions 49 and 88 each coordinate Mg(2+). Residues 49-50, Asp-88, and Lys-118 contribute to the 3-methyl-2-oxobutanoate site; that span reads DS. Glu-120 is a Mg(2+) binding site. Glu-187 serves as the catalytic Proton acceptor.

This sequence belongs to the PanB family. As to quaternary structure, homodecamer; pentamer of dimers. It depends on Mg(2+) as a cofactor.

The protein resides in the cytoplasm. It carries out the reaction 3-methyl-2-oxobutanoate + (6R)-5,10-methylene-5,6,7,8-tetrahydrofolate + H2O = 2-dehydropantoate + (6S)-5,6,7,8-tetrahydrofolate. It functions in the pathway cofactor biosynthesis; (R)-pantothenate biosynthesis; (R)-pantoate from 3-methyl-2-oxobutanoate: step 1/2. In terms of biological role, catalyzes the reversible reaction in which hydroxymethyl group from 5,10-methylenetetrahydrofolate is transferred onto alpha-ketoisovalerate to form ketopantoate. This chain is 3-methyl-2-oxobutanoate hydroxymethyltransferase 1, found in Burkholderia lata (strain ATCC 17760 / DSM 23089 / LMG 22485 / NCIMB 9086 / R18194 / 383).